Here is a 103-residue protein sequence, read N- to C-terminus: Large ribosomal subunit protein bL21 (103 aa).

The protein belongs to the bacterial ribosomal protein bL21 family. As to quaternary structure, part of the 50S ribosomal subunit. Contacts protein L20.

Functionally, this protein binds to 23S rRNA in the presence of protein L20. This chain is Large ribosomal subunit protein bL21, found in Polynucleobacter asymbioticus (strain DSM 18221 / CIP 109841 / QLW-P1DMWA-1) (Polynucleobacter necessarius subsp. asymbioticus).